A 300-amino-acid polypeptide reads, in one-letter code: CDAN1-interacting nuclease 1 (300 aa).

It is found in the nucleus. Its subcellular location is the cytoplasm. In terms of biological role, may play a role in erythroid cell differentiation. In Danio rerio (Zebrafish), this protein is CDAN1-interacting nuclease 1 (cdin1).